Consider the following 63-residue polypeptide: Large ribosomal subunit protein uL29 (63 aa).

It belongs to the universal ribosomal protein uL29 family.

The polypeptide is Large ribosomal subunit protein uL29 (Baumannia cicadellinicola subsp. Homalodisca coagulata).